The following is a 157-amino-acid chain: Mitochondrial inner membrane protease subunit 1 (157 aa).

Catalysis depends on residues Ser-35 and Lys-80.

The protein belongs to the peptidase S26 family. IMP1 subfamily. Heterodimer of 2 subunits, imp1 and imp2.

Its subcellular location is the mitochondrion inner membrane. Functionally, catalyzes the removal of transit peptides required for the targeting of proteins from the mitochondrial matrix, across the inner membrane, into the inter-membrane space. In Schizosaccharomyces pombe (strain 972 / ATCC 24843) (Fission yeast), this protein is Mitochondrial inner membrane protease subunit 1 (imp1).